Reading from the N-terminus, the 157-residue chain is S-ribosylhomocysteine lyase (157 aa).

Residues His53, His57, and Cys124 each contribute to the Fe cation site.

This sequence belongs to the LuxS family. In terms of assembly, homodimer. The cofactor is Fe cation.

The enzyme catalyses S-(5-deoxy-D-ribos-5-yl)-L-homocysteine = (S)-4,5-dihydroxypentane-2,3-dione + L-homocysteine. In terms of biological role, involved in the synthesis of autoinducer 2 (AI-2) which is secreted by bacteria and is used to communicate both the cell density and the metabolic potential of the environment. The regulation of gene expression in response to changes in cell density is called quorum sensing. Catalyzes the transformation of S-ribosylhomocysteine (RHC) to homocysteine (HC) and 4,5-dihydroxy-2,3-pentadione (DPD). The protein is S-ribosylhomocysteine lyase of Borreliella afzelii (strain PKo) (Borrelia afzelii).